We begin with the raw amino-acid sequence, 274 residues long: MKKTALALLALLVSSASLAATPWQKITHPVPGSAQSIGGFSNGCIVGADTLPVQSEHYQVMRTDQRRYFGHPDLVMFIQRLSTQVSNLGFGTVLIGDMGMPAGGRFNGGHASHQTGLDVDIFLQLPKTRWTQAQLLRPQAIDLVSRDGKHVVPSLWKPEISSLIKLAAEDNDVTRIFVNPAIKQQLCLDAGTDRDWLRKVRPWFQHRAHMHVRLRCPADSLECEDQPLPPPGDGCGAELQSWFEPPEPGTTKPEKKTPPPLPPSCQALLDEHVL.

The N-terminal stretch at 1–19 (MKKTALALLALLVSSASLA) is a signal peptide. 3 disulfide bridges follow: Cys44–Cys265, Cys187–Cys235, and Cys216–Cys223. Residues His110, His113, Asp120, Asp147, His150, and His211 each contribute to the Zn(2+) site. Residues 225 to 274 (DQPLPPPGDGCGAELQSWFEPPEPGTTKPEKKTPPPLPPSCQALLDEHVL) form a disordered region.

Belongs to the peptidase M74 family. As to quaternary structure, dimer. It depends on Zn(2+) as a cofactor.

It localises to the periplasm. Functionally, murein endopeptidase that cleaves the D-alanyl-meso-2,6-diamino-pimelyl amide bond that connects peptidoglycan strands. Likely plays a role in the removal of murein from the sacculus. This Citrobacter koseri (strain ATCC BAA-895 / CDC 4225-83 / SGSC4696) protein is Penicillin-insensitive murein endopeptidase.